We begin with the raw amino-acid sequence, 83 residues long: UPF0270 protein CGSHiEE_07180 (83 aa).

It belongs to the UPF0270 family.

The chain is UPF0270 protein CGSHiEE_07180 from Haemophilus influenzae (strain PittEE).